The chain runs to 292 residues: MLPRTLLGLALTAATGLCASLQQVTNWGSNPTNIRMYTYVPDKLATKPAIIVALHGCGGTAPSWYSGTRLPSYADQYGFILIYPGTPNMSNCWGVNDPASLTHGAGGDSLGIVAMVNYTIAKYNADASRVYVMGTSSGGMMTNVMAATYPEVFEAGAAYSGVAHACFAGAASATPFSPNQTCARGLQHTPEEWGNFVRNSYPGYTGRRPRMQIYHGLADNLVYPRCAMEALKQWSNVLGVEFSRNVSGVPSQAYTQIVYGDGSKLVGYMGAGVGHVAPTNEQVMLKFFGLIN.

A signal peptide spans 1-18 (MLPRTLLGLALTAATGLC). Asn88, Asn117, Asn179, and Asn245 each carry an N-linked (GlcNAc...) asparagine glycan.

Belongs to the carbohydrate esterase 1 (CE1) family. Feruloyl esterase type B subfamily.

The protein resides in the secreted. The enzyme catalyses feruloyl-polysaccharide + H2O = ferulate + polysaccharide.. Involved in degradation of plant cell walls. Hydrolyzes of the feruloyl-arabinose ester bond in arabinoxylans as well as the feruloyl-galactose and feruloyl-arabinose ester bonds in pectin. The sequence is that of Feruloyl esterase B (fae-1) from Neurospora crassa (strain ATCC 24698 / 74-OR23-1A / CBS 708.71 / DSM 1257 / FGSC 987).